A 204-amino-acid polypeptide reads, in one-letter code: Leucyl/phenylalanyl-tRNA--protein transferase (204 aa).

This sequence belongs to the L/F-transferase family.

The protein localises to the cytoplasm. It carries out the reaction N-terminal L-lysyl-[protein] + L-leucyl-tRNA(Leu) = N-terminal L-leucyl-L-lysyl-[protein] + tRNA(Leu) + H(+). The enzyme catalyses N-terminal L-arginyl-[protein] + L-leucyl-tRNA(Leu) = N-terminal L-leucyl-L-arginyl-[protein] + tRNA(Leu) + H(+). The catalysed reaction is L-phenylalanyl-tRNA(Phe) + an N-terminal L-alpha-aminoacyl-[protein] = an N-terminal L-phenylalanyl-L-alpha-aminoacyl-[protein] + tRNA(Phe). Functions in the N-end rule pathway of protein degradation where it conjugates Leu, Phe and, less efficiently, Met from aminoacyl-tRNAs to the N-termini of proteins containing an N-terminal arginine or lysine. The sequence is that of Leucyl/phenylalanyl-tRNA--protein transferase from Brucella melitensis biotype 2 (strain ATCC 23457).